We begin with the raw amino-acid sequence, 156 residues long: Zinc metalloproteinase-disintegrin jararin (156 aa).

A Peptidase M12B domain is found at 1-67 (FVANRMAHEL…NYYGCLLNEP (67 aa)). Residue His-8 coordinates Zn(2+). The active site involves Glu-9. His-12 contributes to the Zn(2+) binding site. Disulfide bonds link Cys-23–Cys-47, Cys-25–Cys-30, Cys-78–Cys-97, Cys-89–Cys-107, Cys-91–Cys-102, Cys-101–Cys-124, Cys-115–Cys-121, Cys-120–Cys-145, and Cys-133–Cys-152. In terms of domain architecture, Disintegrin spans 75–156 (PPFCGNYYPE…GQSGDCPRNS (82 aa)). Over residues 136–145 (GRGDNPDDRC) the composition is skewed to basic and acidic residues. Residues 136-156 (GRGDNPDDRCTGQSGDCPRNS) form a disordered region. A Cell attachment site motif is present at residues 137–139 (RGD). Polar residues predominate over residues 146–156 (TGQSGDCPRNS).

It belongs to the venom metalloproteinase (M12B) family. P-II subfamily. P-IIb sub-subfamily. As to quaternary structure, monomer. Zn(2+) is required as a cofactor. Expressed by the venom gland.

It is found in the secreted. Its function is as follows. Snake venom zinc metalloproteinase that inhibits ADP-induced platelet aggregation (probably by binding integrin alpha-IIb/beta-3 (ITGA2B/ITGB3)) and degrades fibrinogen. The sequence is that of Zinc metalloproteinase-disintegrin jararin from Bothrops jararaca (Jararaca).